The chain runs to 405 residues: Palmitoyltransferase PFA3 (405 aa).

Topologically, residues 1-27 (MLISHPRIMIRHAPWVTSIETFCCSLA) are cytoplasmic. Residues 28 to 48 (TLFPKVFYTSVLTWSVYALIV) traverse the membrane as a helical segment. Residues 49-62 (HGCYDTLMTTQETS) are Lumenal-facing. A helical transmembrane segment spans residues 63–83 (IFAIAIGLIGLTLYILCLYTY). Topologically, residues 84–214 (FKVLRAGPGS…GFYNHKFFAQ (131 aa)) are cytoplasmic. Positions 167–217 (RYCTKCSVWKPDRCHHCSTCNRCVLRMDHHCPWFAMCVGFYNHKFFAQFLM) constitute a DHHC domain. Residues 215 to 235 (FLMYLTAYSGFDFVVSLSILW) traverse the membrane as a helical segment. Over 236-251 (KFFADEKYNDHYLSLN) the chain is Lumenal. A helical transmembrane segment spans residues 252–272 (LVFLFVLSLAFFITVGGFSAF). At 273 to 405 (SLYLVFRNKT…ANQTTDTNPF (133 aa)) the chain is on the cytoplasmic side.

This sequence belongs to the DHHC palmitoyltransferase family. PFA3 subfamily. Post-translationally, autopalmitoylated.

It is found in the vacuole membrane. It catalyses the reaction L-cysteinyl-[protein] + hexadecanoyl-CoA = S-hexadecanoyl-L-cysteinyl-[protein] + CoA. In terms of biological role, palmitoyltransferase specific for VAC8. Palmitoylates VAC8 at one or more of its N-terminal cysteine residues, which is required for its proper membrane localization. The chain is Palmitoyltransferase PFA3 (PFA3) from Debaryomyces hansenii (strain ATCC 36239 / CBS 767 / BCRC 21394 / JCM 1990 / NBRC 0083 / IGC 2968) (Yeast).